The chain runs to 808 residues: Probable phosphoketolase 1 (808 aa).

The protein belongs to the XFP family. Requires thiamine diphosphate as cofactor.

This is Probable phosphoketolase 1 from Nostoc sp. (strain PCC 7120 / SAG 25.82 / UTEX 2576).